Here is a 789-residue protein sequence, read N- to C-terminus: DEAD-box ATP-dependent RNA helicase 28 (789 aa).

The interval 1–152 is disordered; the sequence is MPSSFFFEDA…AEYKPEDATP (152 aa). Residues 13 to 66 are a coiled coil; the sequence is DELELIRNQEDSSEEDVKEGEAEEHEAGEDEDGEEEYEEEDDDEEEEDEKRKRD. The span at 23–60 shows a compositional bias: acidic residues; sequence DSSEEDVKEGEAEEHEAGEDEDGEEEYEEEDDDEEEED. Over residues 83 to 99 the composition is skewed to basic and acidic residues; sequence GEEHARRHTTSIDEKIS. Positions 110–135 form a coiled coil; sequence SINEEEEEEEEEEDASDAETDKQEEY. Acidic residues predominate over residues 112–127; that stretch reads NEEEEEEEEEEDASDA. Positions 167–195 match the Q motif motif; sequence DTFMELNLSRPLLRACETLGYKKPTPIQA. The 175-residue stretch at 198 to 372 folds into the Helicase ATP-binding domain; that stretch reads IPLALTGRDL…KLSLNKPLRL (175 aa). 211-218 is an ATP binding site; sequence AITGSGKT. The DEAD box signature appears at 320-323; the sequence is DEAD. The 145-residue stretch at 402-546 folds into the Helicase C-terminal domain; it reads VLLSLCTRTF…SRVIPEQSIV (145 aa). Coiled coils occupy residues 563–591 and 628–677; these read ISAE…HRDE and SADR…EDEE. The tract at residues 611-789 is disordered; it reads AQAEKDSAGN…FKSKARYKRR (179 aa). Over residues 628 to 637 the composition is skewed to basic and acidic residues; the sequence is SADRAEDLKM. The span at 638 to 656 shows a compositional bias: basic residues; the sequence is KEKRKREREKNLPRKKRRK. A compositionally biased stretch (acidic residues) spans 665–678; that stretch reads EDNEGEEEEEDEEG. Basic and acidic residues-rich tracts occupy residues 691–701, 718–734, and 743–761; these read KKQETDKKGLT, RAID…DKKQ, and PRGE…EKKQ. Basic residues predominate over residues 772 to 789; it reads PRTKSKNSFKSKARYKRR.

It belongs to the DEAD box helicase family. DDX27/DRS1 subfamily.

It catalyses the reaction ATP + H2O = ADP + phosphate + H(+). This Arabidopsis thaliana (Mouse-ear cress) protein is DEAD-box ATP-dependent RNA helicase 28 (RH28).